The primary structure comprises 56 residues: Serine protease inhibitor Kazal-type 1 (56 aa).

The 54-residue stretch at 3-56 (LGREAKCNNNAGGCTKIYNPVCGTDGNTYPNECMLCVENQKRQMPVLIQRSGPC) folds into the Kazal-like domain. 3 cysteine pairs are disulfide-bonded: C9–C38, C16–C35, and C24–C56.

It localises to the secreted. In terms of biological role, serine protease inhibitor which exhibits anti-trypsin activity. In the pancreas, protects against trypsin-catalyzed premature activation of zymogens. In the male reproductive tract, binds to sperm heads where it modulates sperm capacitance by inhibiting calcium uptake and nitrogen oxide (NO) production. The sequence is that of Serine protease inhibitor Kazal-type 1 (SPINK1) from Equus caballus (Horse).